A 477-amino-acid polypeptide reads, in one-letter code: P3 protein (477 aa).

A disordered region spans residues 1–21 (MVLMQDKGSSQQWPGLGGEGG). 8 helical membrane passes run 225-245 (PMLL…FLMA), 253-273 (ALAL…SYLF), 281-301 (VTLA…FLPL), 320-340 (ISKI…GVLI), 361-381 (VLLL…LAGI), 383-403 (LPIV…GYCL), 417-437 (VSIE…QLSL), and 450-470 (FIVA…HFIY).

Belongs to the bile acid:sodium symporter (BASS) (TC 2.A.28) family.

Its subcellular location is the membrane. In terms of biological role, the ubiquitous expression and the conservation of the sequence in distant animal species suggest that the gene codes for a protein with housekeeping functions. This chain is P3 protein (SLC10A3), found in Homo sapiens (Human).